Here is a 554-residue protein sequence, read N- to C-terminus: 3-(3-hydroxy-phenyl)propionate/3-hydroxycinnamic acid hydroxylase (554 aa).

FAD contacts are provided by residues 17 to 46 and 285 to 295; these read QVAIAGAGPVGLMMANYLGQMGIDVLVVEK and FRIDRVLLAGD.

The protein belongs to the PheA/TfdB FAD monooxygenase family. Requires FAD as cofactor.

It catalyses the reaction 3-(3-hydroxyphenyl)propanoate + NADH + O2 + H(+) = 3-(2,3-dihydroxyphenyl)propanoate + NAD(+) + H2O. The catalysed reaction is (2E)-3-(3-hydroxyphenyl)prop-2-enoate + NADH + O2 + H(+) = (2E)-3-(2,3-dihydroxyphenyl)prop-2-enoate + NAD(+) + H2O. It participates in aromatic compound metabolism; 3-phenylpropanoate degradation. Catalyzes the insertion of one atom of molecular oxygen into position 2 of the phenyl ring of 3-(3-hydroxyphenyl)propionate (3-HPP) and hydroxycinnamic acid (3HCI). The sequence is that of 3-(3-hydroxy-phenyl)propionate/3-hydroxycinnamic acid hydroxylase from Escherichia coli (strain 55989 / EAEC).